The following is a 170-amino-acid chain: Photosystem I assembly protein Ycf3 (170 aa).

TPR repeat units lie at residues 35-68 (AFTYYRDGMLAQSEGNYAEALQNYYEAMRLEIDP), 72-105 (SYILYNIGLIHTSNGEHTKALEYYFRALERNPFL), and 120-153 (GEQAILQGDSEIAEAWFDQAAEYWKQAIALTPGN).

It belongs to the Ycf3 family.

The protein localises to the plastid. Its subcellular location is the chloroplast thylakoid membrane. Essential for the assembly of the photosystem I (PSI) complex. May act as a chaperone-like factor to guide the assembly of the PSI subunits. The chain is Photosystem I assembly protein Ycf3 from Triticum aestivum (Wheat).